We begin with the raw amino-acid sequence, 107 residues long: L-rhamnose mutarotase (107 aa).

Tyr21 is a substrate binding site. Catalysis depends on His25, which acts as the Proton donor. Residues Tyr44 and 79–80 (WW) each bind substrate. Positions 88–107 (ETNPDNSPKTNSLKEVFHLD) are disordered. Residues 90 to 100 (NPDNSPKTNSL) are compositionally biased toward polar residues.

This sequence belongs to the rhamnose mutarotase family. In terms of assembly, homodimer.

The protein localises to the cytoplasm. The enzyme catalyses alpha-L-rhamnose = beta-L-rhamnose. It functions in the pathway carbohydrate metabolism; L-rhamnose metabolism. Involved in the anomeric conversion of L-rhamnose. The chain is L-rhamnose mutarotase from Flavobacterium johnsoniae (strain ATCC 17061 / DSM 2064 / JCM 8514 / BCRC 14874 / CCUG 350202 / NBRC 14942 / NCIMB 11054 / UW101) (Cytophaga johnsonae).